Here is a 568-residue protein sequence, read N- to C-terminus: Phosphomethylpyrimidine synthase (568 aa).

Substrate-binding positions include Asn188, Met217, Tyr246, His282, 302 to 304 (SRG), 343 to 346 (DGLR), and Glu382. His386 serves as a coordination point for Zn(2+). A substrate-binding site is contributed by Tyr409. His450 contributes to the Zn(2+) binding site. [4Fe-4S] cluster-binding residues include Cys530, Cys533, and Cys538.

Belongs to the ThiC family. As to quaternary structure, homodimer. [4Fe-4S] cluster is required as a cofactor.

The enzyme catalyses 5-amino-1-(5-phospho-beta-D-ribosyl)imidazole + S-adenosyl-L-methionine = 4-amino-2-methyl-5-(phosphooxymethyl)pyrimidine + CO + 5'-deoxyadenosine + formate + L-methionine + 3 H(+). The protein operates within cofactor biosynthesis; thiamine diphosphate biosynthesis. Catalyzes the synthesis of the hydroxymethylpyrimidine phosphate (HMP-P) moiety of thiamine from aminoimidazole ribotide (AIR) in a radical S-adenosyl-L-methionine (SAM)-dependent reaction. The polypeptide is Phosphomethylpyrimidine synthase (Idiomarina loihiensis (strain ATCC BAA-735 / DSM 15497 / L2-TR)).